A 183-amino-acid chain; its full sequence is Inosine/xanthosine triphosphatase (183 aa).

Mg(2+) is bound at residue Asp75. 75 to 76 contacts substrate; sequence DG.

This sequence belongs to the YjjX NTPase family. As to quaternary structure, homodimer. Mg(2+) serves as cofactor. The cofactor is Mn(2+).

It carries out the reaction XTP + H2O = XDP + phosphate + H(+). The catalysed reaction is ITP + H2O = IDP + phosphate + H(+). Its function is as follows. Phosphatase that hydrolyzes non-canonical purine nucleotides such as XTP and ITP to their respective diphosphate derivatives. Probably excludes non-canonical purines from DNA/RNA precursor pool, thus preventing their incorporation into DNA/RNA and avoiding chromosomal lesions. This Vibrio vulnificus (strain YJ016) protein is Inosine/xanthosine triphosphatase.